Consider the following 667-residue polypeptide: UvrABC system protein B (667 aa).

The Helicase ATP-binding domain maps to 25 to 414 (TGLQRGDKHQ…GVVVEQIIRP (390 aa)). ATP is bound at residue 38–45 (GVTGSGKT). The Beta-hairpin motif lies at 91-114 (YYDYYQPEAYVPTTDTFIEKDSSI). Residues 430–596 (QVDDLIHEIR…TVKKSLRSIL (167 aa)) form the Helicase C-terminal domain. Residues 624–659 (KNEIARVKEEMLAAAANLEFEKAAELRDRMLELDKL) enclose the UVR domain.

This sequence belongs to the UvrB family. As to quaternary structure, forms a heterotetramer with UvrA during the search for lesions. Interacts with UvrC in an incision complex.

It is found in the cytoplasm. The UvrABC repair system catalyzes the recognition and processing of DNA lesions. A damage recognition complex composed of 2 UvrA and 2 UvrB subunits scans DNA for abnormalities. Upon binding of the UvrA(2)B(2) complex to a putative damaged site, the DNA wraps around one UvrB monomer. DNA wrap is dependent on ATP binding by UvrB and probably causes local melting of the DNA helix, facilitating insertion of UvrB beta-hairpin between the DNA strands. Then UvrB probes one DNA strand for the presence of a lesion. If a lesion is found the UvrA subunits dissociate and the UvrB-DNA preincision complex is formed. This complex is subsequently bound by UvrC and the second UvrB is released. If no lesion is found, the DNA wraps around the other UvrB subunit that will check the other stand for damage. This is UvrABC system protein B from Syntrophotalea carbinolica (strain DSM 2380 / NBRC 103641 / GraBd1) (Pelobacter carbinolicus).